Here is a 302-residue protein sequence, read N- to C-terminus: Putative peptide permease protein BOV_A0350 (302 aa).

Residues 1 to 22 (MRSSIHASRLRKMGQSIPASTG) form a disordered region. Transmembrane regions (helical) follow at residues 38–58 (IFGL…PLWL), 101–121 (LLVA…IGAI), 147–167 (IFLL…VVVI), 200–222 (AGLG…VVYA), 230–250 (ILLE…AASW), and 268–288 (WQWL…NFIG). The ABC transmembrane type-1 domain maps to 97–288 (GRISLLVAVS…LAVLAINFIG (192 aa)).

It belongs to the binding-protein-dependent transport system permease family. In terms of assembly, the complex is composed of two ATP-binding proteins (BOV_A0347 and BOV_A0348), two transmembrane proteins (BOV_A0350 and BOV_A0351) and a solute-binding protein (BOV_A0352).

It localises to the cell inner membrane. Its function is as follows. Probably part of an ABC transporter complex that could be involved in peptide import. Probably responsible for the translocation of the substrate across the membrane. The protein is Putative peptide permease protein BOV_A0350 of Brucella ovis (strain ATCC 25840 / 63/290 / NCTC 10512).